Consider the following 952-residue polypeptide: Protein translocase subunit SecA (952 aa).

Residues Gln135, 153–157 (GEGKT), and Asp575 contribute to the ATP site. A compositionally biased stretch (basic and acidic residues) spans 614–624 (RHESRRIDNQL). Disordered stretches follow at residues 614-636 (RHES…DPGS) and 916-946 (VSAK…GKKY). Residues Cys938, Cys940, Cys949, and Cys950 each contribute to the Zn(2+) site.

The protein belongs to the SecA family. Monomer and homodimer. Part of the essential Sec protein translocation apparatus which comprises SecA, SecYEG and auxiliary proteins SecDF. Other proteins may also be involved. It depends on Zn(2+) as a cofactor.

The protein resides in the cell membrane. It is found in the cytoplasm. The enzyme catalyses ATP + H2O + cellular proteinSide 1 = ADP + phosphate + cellular proteinSide 2.. Part of the Sec protein translocase complex. Interacts with the SecYEG preprotein conducting channel. Has a central role in coupling the hydrolysis of ATP to the transfer of proteins into and across the cell membrane, serving as an ATP-driven molecular motor driving the stepwise translocation of polypeptide chains across the membrane. This chain is Protein translocase subunit SecA, found in Dehalococcoides mccartyi (strain ATCC BAA-2100 / JCM 16839 / KCTC 5957 / BAV1).